The sequence spans 447 residues: Probable glycine dehydrogenase (decarboxylating) subunit 1 (447 aa).

It belongs to the GcvP family. N-terminal subunit subfamily. The glycine cleavage system is composed of four proteins: P, T, L and H. In this organism, the P 'protein' is a heterodimer of two subunits.

The catalysed reaction is N(6)-[(R)-lipoyl]-L-lysyl-[glycine-cleavage complex H protein] + glycine + H(+) = N(6)-[(R)-S(8)-aminomethyldihydrolipoyl]-L-lysyl-[glycine-cleavage complex H protein] + CO2. In terms of biological role, the glycine cleavage system catalyzes the degradation of glycine. The P protein binds the alpha-amino group of glycine through its pyridoxal phosphate cofactor; CO(2) is released and the remaining methylamine moiety is then transferred to the lipoamide cofactor of the H protein. The polypeptide is Probable glycine dehydrogenase (decarboxylating) subunit 1 (Bacillus thuringiensis subsp. konkukian (strain 97-27)).